Here is a 250-residue protein sequence, read N- to C-terminus: Gamma-secretase subunit APH1-like (250 aa).

A run of 7 helical transmembrane segments spans residues 5–25 (AGIG…VSVI), 29–49 (PFLI…LIIL), 57–77 (LPLK…SVCF), 116–136 (IALA…CLSL), 157–177 (FLIS…SMVI), 191–211 (IIVP…FASE), and 212–232 (GCVI…VHCG).

The protein belongs to the APH-1 family. Probable component of the gamma-secretase complex, a complex composed of a presenilin homodimer, nicastrin, APH1 and PEN2.

It is found in the membrane. Probable subunit of the gamma-secretase complex, an endoprotease complex that catalyzes the intramembrane cleavage of integral proteins such as Notch receptors. The polypeptide is Gamma-secretase subunit APH1-like (Arabidopsis thaliana (Mouse-ear cress)).